We begin with the raw amino-acid sequence, 1031 residues long: MAAWLVRMSAYAELHCLSNFSFQRGASSATELFARAARLGYRALAITDECSLAGIVRAWQAAREHQVQLIVGSEIRLEQGPKLVLLAEDLEGYQNLCRLITRGRRQADKGHYRLLREDLQQPLAGLLAIWLPNDHGDEQAAWLRERFPQRLWLGVELHRGADDDARLDKLLALASHLRLPPVACGDVHMHARGRRALQDCMTAIRNHLPVSEAGAYLFPNGERHLRTLEALQGIYPQALLAETLKIAERCRFDLEQLKYQYPRELVPAGHDPASWLRHLTEQGIARRWPNGASAKVRKQIERELELIAELGYESYFLTVQDIVAFARGRKILCQGRGSAANSAVCFALGITELDPDRTNLLFERFLSRERNEPPDIDVDFEHERREEVIQYVFTRYGRQRAALTAVVSTYHGAGAVRDVAKALGLPPEQVDVLANCCGRWSDQAPSAERLEEAGFDPQSPILRRVLALTDELIGFPRHLSQHPGGFVISEQPLDTLVPVENASMAERTVIQWDKDDLDAVGLLKVDVLALGMLSALRRSFDLIHALRGGKRLSIASIPSEDPATYEMISRADTIGVFQIESRAQMAMLPRLRPQKFYDLVIQVAIVRPGPIQGDMVHPYLRRRNGEEPVAYPSAELEEVFERTLGVPLFQEQVMELAIVAADYTPGEADELRRSMAAWKRHGGLEHHRERLTRGMLAKGYEADFAARIFEQIKGFGSYGFPESHAASFALLTYASSWLKRHEPAAFACALINSWPMGFYSPDQLLQDARRHALQTRPVDVRHSGWDCSLESFGQAQPAIRLGLRMIRGFREEDARRIEQVREAEPFLDVHDLGRRARLDARALELLADAGALRGLAGHRHKARWAVASVEPQLPLFAEGTAIEESTVSLPLPSRGEELLSDYALLGTTLGPHPLKLLRGQLKARRCRDSRELAKLGHGRPIRVAGLVVGRQRPQTASGITFITLEDEFGMVNVVVRHDLAERQRRPFLESRLLQVEGILESSGEVRHVIAGRLHDLTPLLTGLDVRSRDFH.

It belongs to the DNA polymerase type-C family. DnaE2 subfamily.

It is found in the cytoplasm. It carries out the reaction DNA(n) + a 2'-deoxyribonucleoside 5'-triphosphate = DNA(n+1) + diphosphate. In terms of biological role, DNA polymerase involved in damage-induced mutagenesis and translesion synthesis (TLS). It is not the major replicative DNA polymerase. In Pseudomonas aeruginosa (strain ATCC 15692 / DSM 22644 / CIP 104116 / JCM 14847 / LMG 12228 / 1C / PRS 101 / PAO1), this protein is Error-prone DNA polymerase.